An 86-amino-acid chain; its full sequence is MSLLDYFRAKKEPTTATTAKERLQIIVAHQRGERDAPDYFPAMKQEIIEVIRKYVQIDSDQVSVQLDQNDDNLSVLELNVTLPEKP.

This sequence belongs to the MinE family.

Functionally, prevents the cell division inhibition by proteins MinC and MinD at internal division sites while permitting inhibition at polar sites. This ensures cell division at the proper site by restricting the formation of a division septum at the midpoint of the long axis of the cell. The protein is Cell division topological specificity factor of Shewanella loihica (strain ATCC BAA-1088 / PV-4).